The chain runs to 361 residues: MLYWLIDFSSSFPAFNVFRYITFRTGGAVVTGALFVFLCGPWIIDNLRLRQGKGQPIRADGPQSHLVTKRGTPTMGGLMILSGLTVGTVLWANPLNPYVWIVLAVTLGFGFVGFYDDYMKVTKQTHAGISGRTRLLIEFAIAGAACFALVWLGRGSLSSSLVIPFFKEVVLNLGWYFVIFGAFVIVGAGNAVNLTDGLDGLAIVPVMIAAASFGMISYLVGNAVFAEYLQINYVAGTGELAVLCGALLGAGLGFLWFNAPPASIFMGDTGSLALGGMLGSIAVAVKHEIVLAVIGGLFVLEAVSVIVQVASFKLTGKRVFRMAPIHHHFEQKGWTEPQIVIRFWIIAVILALAGLSTLKLR.

10 helical membrane passes run 25-45, 72-92, 95-115, 135-155, 169-189, 200-220, 240-260, 264-284, 289-309, and 338-358; these read TGGAVVTGALFVFLCGPWIID, TPTMGGLMILSGLTVGTVLWA, LNPYVWIVLAVTLGFGFVGFY, LLIEFAIAGAACFALVWLGRG, VVLNLGWYFVIFGAFVIVGAG, GLAIVPVMIAAASFGMISYLV, LAVLCGALLGAGLGFLWFNAP, IFMGDTGSLALGGMLGSIAVA, IVLAVIGGLFVLEAVSVIVQV, and QIVIRFWIIAVILALAGLSTL.

Belongs to the glycosyltransferase 4 family. MraY subfamily. It depends on Mg(2+) as a cofactor.

It is found in the cell inner membrane. It catalyses the reaction UDP-N-acetyl-alpha-D-muramoyl-L-alanyl-gamma-D-glutamyl-meso-2,6-diaminopimeloyl-D-alanyl-D-alanine + di-trans,octa-cis-undecaprenyl phosphate = di-trans,octa-cis-undecaprenyl diphospho-N-acetyl-alpha-D-muramoyl-L-alanyl-D-glutamyl-meso-2,6-diaminopimeloyl-D-alanyl-D-alanine + UMP. It participates in cell wall biogenesis; peptidoglycan biosynthesis. Functionally, catalyzes the initial step of the lipid cycle reactions in the biosynthesis of the cell wall peptidoglycan: transfers peptidoglycan precursor phospho-MurNAc-pentapeptide from UDP-MurNAc-pentapeptide onto the lipid carrier undecaprenyl phosphate, yielding undecaprenyl-pyrophosphoryl-MurNAc-pentapeptide, known as lipid I. This chain is Phospho-N-acetylmuramoyl-pentapeptide-transferase, found in Rhodopseudomonas palustris (strain HaA2).